The sequence spans 571 residues: Leiomodin-3 (571 aa).

Disordered stretches follow at residues 1–29, 46–67, and 91–228; these read MSGH…NLSP, PHLP…GNFN, and PVSF…AKLD. A compositionally biased stretch (acidic residues) spans 10-23; that stretch reads QEDTLSEELDEDEL. The segment covering 94–105 has biased composition (polar residues); the sequence is FVQSEKNTQNQR. Over residues 119–134 the composition is skewed to basic and acidic residues; it reads LKEKLNSEILAKKRES. A compositionally biased stretch (acidic residues) spans 142-179; that stretch reads EAEDDDEDEEEEEEDDEDEEEEEEDEEDDEGEEDEDGE. A compositionally biased stretch (basic and acidic residues) spans 180–192; it reads QANREKNDAKEQI. Over residues 193–204 the composition is skewed to polar residues; that stretch reads HNNPGTYQQLAT. A compositionally biased stretch (basic and acidic residues) spans 206-228; it reads TAHEQKDTSETKEKGEKKIAKLD. Residues 397–436 adopt a coiled-coil conformation; sequence VTNLLTRNQDKRRQKRQEEQQQQQLKEQRKLIAMLENGLG. Positions 545 to 564 constitute a WH2 domain; sequence PRDQLLNDIRHSNVAYLKPV.

It belongs to the tropomodulin family. As to quaternary structure, may interact with tropomyosin alpha (TPM1/2) N-terminus. Interacts with KLHL40; leading to stabilization. Post-translationally, ubiquitinated, leading to its degradation. Interaction with KLHL40 negatively regulates ubiquitination and degradation. In terms of tissue distribution, skeletal muscle and heart-specific (at protein level).

The protein localises to the cytoplasm. It localises to the myofibril. The protein resides in the sarcomere. It is found in the a band. Its subcellular location is the m line. The protein localises to the cytoskeleton. Essential for the organization of sarcomeric actin thin filaments in skeletal muscle. Increases the rate of actin polymerization. The protein is Leiomodin-3 of Mus musculus (Mouse).